We begin with the raw amino-acid sequence, 446 residues long: MFLAQEVIRKKRDAVSLSDTDIQQFVNGICDDSVSEGQIAALAMAIYFRGMSAQEKTALTVAMRDSGDVLDWRQDNLNGPVLDKHSTGGVGDVVSLMLGPIVAACGGYVPMISGRGLGHTGGTLDKFDAIPGYQTAPDNRRFRDTVKQAGVAIIGQTGRLAPADSRFYATRDVTATVESIPLITASILAKKLAEGLDGLVMDVKAGNGAFMPGYDESRELAQSLVSVGRKLGVETTALITDMNQALGSAAGNAVEVQLAVDYLTGKRRDKRLHQVTKALSAELLVSGNLAKSTDQAEVMVENVLGSGLAAERFAKMVGSLGGPHDFLEKSDQYLPQANLRKPLKLPAEYHGLYLSEVNTRELGMAVVCLGGGRRKADDKLDLSVGMTDILTVGSKVDSESVIATVHASNESDWQEAADSILKALSFSSTPPEPDSVIYERIAGETE.

Belongs to the thymidine/pyrimidine-nucleoside phosphorylase family. As to quaternary structure, homodimer.

It carries out the reaction thymidine + phosphate = 2-deoxy-alpha-D-ribose 1-phosphate + thymine. It participates in pyrimidine metabolism; dTMP biosynthesis via salvage pathway; dTMP from thymine: step 1/2. Its function is as follows. The enzymes which catalyze the reversible phosphorolysis of pyrimidine nucleosides are involved in the degradation of these compounds and in their utilization as carbon and energy sources, or in the rescue of pyrimidine bases for nucleotide synthesis. In Idiomarina loihiensis (strain ATCC BAA-735 / DSM 15497 / L2-TR), this protein is Thymidine phosphorylase.